Consider the following 107-residue polypeptide: Large ribosomal subunit protein uL24 (107 aa).

Belongs to the universal ribosomal protein uL24 family. As to quaternary structure, part of the 50S ribosomal subunit.

One of two assembly initiator proteins, it binds directly to the 5'-end of the 23S rRNA, where it nucleates assembly of the 50S subunit. Its function is as follows. One of the proteins that surrounds the polypeptide exit tunnel on the outside of the subunit. This chain is Large ribosomal subunit protein uL24, found in Streptomyces griseus subsp. griseus (strain JCM 4626 / CBS 651.72 / NBRC 13350 / KCC S-0626 / ISP 5235).